We begin with the raw amino-acid sequence, 74 residues long: MASRNSVAVIALFAFVFAVISPFAGAQSLAPAPSPTSDGTSIDQGIAYLLMVVALVLTYLIHPLDASSSSYTFF.

An N-terminal signal peptide occupies residues Met1 to Ala26. Gln27 carries the post-translational modification Pyrrolidone carboxylic acid. 4-hydroxyproline is present on residues Pro31, Pro33, and Pro35. O-linked (Ara...) hydroxyproline glycosylation is found at Pro31, Pro33, and Pro35. Ser37 carries the GPI-anchor amidated serine lipid modification. Positions Asp38–Phe74 are cleaved as a propeptide — removed in mature form.

Belongs to the AG-peptide AGP family. In terms of processing, contains 4-hydroxyproline; hydroxylated on Pro-31, Pro-33 and Pro-35. O-glycosylated on hydroxyprolines; noncontiguous hydroxylproline residues are glycosylated with arabinogalactan.

The protein localises to the cell membrane. Its function is as follows. Proteoglycan that seems to be implicated in diverse developmental roles such as differentiation, cell-cell recognition, embryogenesis and programmed cell death. In Arabidopsis thaliana (Mouse-ear cress), this protein is Arabinogalactan protein 20.